The chain runs to 343 residues: UDP-3-O-acylglucosamine N-acyltransferase 2 (343 aa).

Catalysis depends on His251, which acts as the Proton acceptor.

The protein belongs to the transferase hexapeptide repeat family. LpxD subfamily. Homotrimer.

The enzyme catalyses a UDP-3-O-[(3R)-3-hydroxyacyl]-alpha-D-glucosamine + a (3R)-hydroxyacyl-[ACP] = a UDP-2-N,3-O-bis[(3R)-3-hydroxyacyl]-alpha-D-glucosamine + holo-[ACP] + H(+). Its pathway is bacterial outer membrane biogenesis; LPS lipid A biosynthesis. Catalyzes the N-acylation of UDP-3-O-acylglucosamine using 3-hydroxyacyl-ACP as the acyl donor. Is involved in the biosynthesis of lipid A, a phosphorylated glycolipid that anchors the lipopolysaccharide to the outer membrane of the cell. This is UDP-3-O-acylglucosamine N-acyltransferase 2 from Legionella pneumophila (strain Lens).